A 359-amino-acid polypeptide reads, in one-letter code: Type-1 angiotensin II receptor B (359 aa).

Residues 1–25 (MTLNSSTEDGIKRIQDDCPKAGRHN) lie on the Extracellular side of the membrane. An N-linked (GlcNAc...) asparagine glycan is attached at N4. The angiotensin II site is built by Q15 and D17. 2 disulfides stabilise this stretch: C18/C274 and C101/C180. The chain crosses the membrane as a helical span at residues 26-55 (YIFVMIPTLYSIIFVVGIFGNSLVVIVIYF). Over 56 to 61 (YMKLKT) the chain is Cytoplasmic. Residues 62-89 (VASVFLLNLALADLCFLLTLPLWAVYTA) traverse the membrane as a helical segment. At 90–98 (MEYRWPFGN) the chain is on the extracellular side. A helical transmembrane segment spans residues 99–125 (HLCKIASASVSFNLYASVFLLTCLSID). Over 126 to 141 (RYLAIVHPMKSRLRRT) the chain is Cytoplasmic. The helical transmembrane segment at 142-165 (MLVAKVTCIIIWLMAGLASLPAVI) threads the bilayer. Over 166 to 190 (YRNVYFIENTNITVCAFHYESQNST) the chain is Extracellular. R167 is an angiotensin II binding site. Residue N176 is glycosylated (N-linked (GlcNAc...) asparagine). The angiotensin II site is built by F182, H183, and Y184. Residue N188 is glycosylated (N-linked (GlcNAc...) asparagine). Residues 191 to 216 (LPIGLGLTKNILGFVFPFLIILTSYT) form a helical membrane-spanning segment. K199 contributes to the angiotensin II binding site. Residues 217–239 (LIWKALKKAYKIQKNTPRNDDIF) lie on the Cytoplasmic side of the membrane. A helical transmembrane segment spans residues 240–268 (RIIMAIVLFFFFSWVPHQIFTFLDVLIQL). Topologically, residues 269 to 278 (GIIRDCEIAD) are extracellular. A helical membrane pass occupies residues 279 to 304 (IVDTAMPITICIAYFNNCLNPLFYGF). The Cytoplasmic portion of the chain corresponds to 305 to 359 (LGKKFKKYFLQLLKYIPPTAKSHAGLSTKMSTLSYRPSDNMSSSAKKSASFFEVE). The segment at 339 to 359 (YRPSDNMSSSAKKSASFFEVE) is disordered. Over residues 346–359 (SSSAKKSASFFEVE) the composition is skewed to low complexity.

It belongs to the G-protein coupled receptor 1 family. Interacts with MAS1. Interacts with ARRB1. Interacts with FLNA (via filamin repeat 21); increases PKA-mediated phosphorylation of FLNA. Post-translationally, C-terminal Ser or Thr residues may be phosphorylated. As to expression, is expressed in the liver, kidney, aorta, lung, uterus, ovary, spleen, heart, and vascular smooth muscle cell. Expressed most abundantly in the adrenal gland.

It is found in the cell membrane. Receptor for angiotensin II, a vasoconstricting peptide, which acts as a key regulator of blood pressure and sodium retention by the kidney. The activated receptor in turn couples to G-alpha proteins G(q) (GNAQ, GNA11, GNA14 or GNA15) and thus activates phospholipase C and increases the cytosolic Ca(2+) concentrations, which in turn triggers cellular responses such as stimulation of protein kinase C. This Rattus norvegicus (Rat) protein is Type-1 angiotensin II receptor B (Agtr1b).